Consider the following 573-residue polypeptide: MRTENTATLNLMWGALILEELARLGVQHVCMAPGSRSTPLTLAAAKQTKLKRHLHFDERGLGFMALGLAKASSAPVAIITTSGTAVANLYPAIVEAWLTHVPLIVLSGDRPPELLGCGANQAIVQPAIFANYAQQVNLPTPDAHIAPQMLLTTLDEAVANQTRPVHINCMYREPLYPSELTATILDSESPYLKPLQTWLQQARPYTIYGKREQLSHPSEDAIMRFVHGKGVIIAGTLTPEQDPQQLIALSQKIGWPLLTDAQSQLRQHPAAIGNIDQLLQHPKARNLLQEADRVLVFGGRLLSKRLIAYLAEQNWHSYWQVLPQQDRLDPSHNAKHIWHANAAQFAQLNWYRSSSANWANTLITYNDDLHHLFVRNIDQGEFGEAQVIRAIANTRPLEQQLFIGNSLPVRLYDMYAPVSCCTATTYTNRGASGIDGLLATACGIAAHQGKPTSLIIGDLSQLHDLNSFAIARSLTSPLVIIILNNDGGNIFNLLPVPNEELRSDYYRLSHGLEFGYAAAMFNLPYNQVDNLADFQTCYNEALDFQGASVIEVTVSQHQASEQIAALNLWVKQS.

This sequence belongs to the TPP enzyme family. MenD subfamily. Homodimer. It depends on Mg(2+) as a cofactor. The cofactor is Mn(2+). Thiamine diphosphate serves as cofactor.

The catalysed reaction is isochorismate + 2-oxoglutarate + H(+) = 5-enolpyruvoyl-6-hydroxy-2-succinyl-cyclohex-3-ene-1-carboxylate + CO2. The protein operates within quinol/quinone metabolism; 1,4-dihydroxy-2-naphthoate biosynthesis; 1,4-dihydroxy-2-naphthoate from chorismate: step 2/7. It participates in quinol/quinone metabolism; menaquinone biosynthesis. Its function is as follows. Catalyzes the thiamine diphosphate-dependent decarboxylation of 2-oxoglutarate and the subsequent addition of the resulting succinic semialdehyde-thiamine pyrophosphate anion to isochorismate to yield 2-succinyl-5-enolpyruvyl-6-hydroxy-3-cyclohexene-1-carboxylate (SEPHCHC). The protein is 2-succinyl-5-enolpyruvyl-6-hydroxy-3-cyclohexene-1-carboxylate synthase of Shewanella oneidensis (strain ATCC 700550 / JCM 31522 / CIP 106686 / LMG 19005 / NCIMB 14063 / MR-1).